We begin with the raw amino-acid sequence, 125 residues long: Small ribosomal subunit protein uS12c (125 aa).

Belongs to the universal ribosomal protein uS12 family. In terms of assembly, part of the 30S ribosomal subunit.

The protein localises to the plastid. Functionally, with S4 and S5 plays an important role in translational accuracy. Located at the interface of the 30S and 50S subunits. The protein is Small ribosomal subunit protein uS12c (rps12) of Euglena longa (Euglenophycean alga).